Here is a 302-residue protein sequence, read N- to C-terminus: Sulfate adenylyltransferase subunit 2 (302 aa).

It belongs to the PAPS reductase family. CysD subfamily. Heterodimer composed of CysD, the smaller subunit, and CysN.

The enzyme catalyses sulfate + ATP + H(+) = adenosine 5'-phosphosulfate + diphosphate. Its pathway is sulfur metabolism; hydrogen sulfide biosynthesis; sulfite from sulfate: step 1/3. Functionally, with CysN forms the ATP sulfurylase (ATPS) that catalyzes the adenylation of sulfate producing adenosine 5'-phosphosulfate (APS) and diphosphate, the first enzymatic step in sulfur assimilation pathway. APS synthesis involves the formation of a high-energy phosphoric-sulfuric acid anhydride bond driven by GTP hydrolysis by CysN coupled to ATP hydrolysis by CysD. The protein is Sulfate adenylyltransferase subunit 2 of Baumannia cicadellinicola subsp. Homalodisca coagulata.